The primary structure comprises 313 residues: tRNA dimethylallyltransferase (313 aa).

ATP is bound at residue 11–18; that stretch reads GPTAAGKS. 13-18 contacts substrate; it reads TAAGKS. Interaction with substrate tRNA stretches follow at residues 36 to 39, 160 to 164, and 244 to 249; these read DSAT, QRIQR, and RCVGYR.

Belongs to the IPP transferase family. As to quaternary structure, monomer. The cofactor is Mg(2+).

The catalysed reaction is adenosine(37) in tRNA + dimethylallyl diphosphate = N(6)-dimethylallyladenosine(37) in tRNA + diphosphate. Its function is as follows. Catalyzes the transfer of a dimethylallyl group onto the adenine at position 37 in tRNAs that read codons beginning with uridine, leading to the formation of N6-(dimethylallyl)adenosine (i(6)A). In Bordetella pertussis (strain Tohama I / ATCC BAA-589 / NCTC 13251), this protein is tRNA dimethylallyltransferase.